A 544-amino-acid chain; its full sequence is Protein angel homolog 2 (544 aa).

The protein belongs to the CCR4/nocturin family.

The polypeptide is Protein angel homolog 2 (ANGEL2) (Homo sapiens (Human)).